Here is a 156-residue protein sequence, read N- to C-terminus: Single-stranded DNA-binding protein 1 (156 aa).

In terms of domain architecture, SSB spans 1–104; it reads MLNRTILVGR…VVADSIQFLE (104 aa). The segment at 122–146 is disordered; sequence QTRGQSQYSNNKPVKDNPFANANCP.

In terms of assembly, homotetramer.

The sequence is that of Single-stranded DNA-binding protein 1 (ssb1) from Staphylococcus aureus (strain MSSA476).